The following is a 678-amino-acid chain: RxLR effector protein PITG_16705 (678 aa).

The first 20 residues, 1–20 (MHLFFLTAVAFVITSVSVDA), serve as a signal peptide directing secretion. The RxLR-dEER motif lies at 46–61 (RLLRKNSTVDLVGEER).

The protein belongs to the RxLR effector family.

The protein localises to the secreted. Its subcellular location is the host cytoplasm. Its function is as follows. Effector that enhances P.infestans colonization of Nicotiana benthamiana leaves. The polypeptide is RxLR effector protein PITG_16705 (Phytophthora infestans (strain T30-4) (Potato late blight agent)).